The primary structure comprises 436 residues: Na(+)/H(+) antiporter NhaA 2 (436 aa).

Transmembrane regions (helical) follow at residues 35–55 (FGGG…NSPW), 80–100 (LATW…GLEL), 116–136 (ALPV…YVGI), 147–167 (GWAI…AVIG), 176–196 (AFLL…IAIF), 201–221 (FKLT…LLVQ), 226–246 (WWWA…ESGV), 283–303 (VSAG…SLRG), 313–333 (PIVV…IFGS), 354–374 (LLGV…IGEL), and 385–405 (VKAA…AVLS).

This sequence belongs to the NhaA Na(+)/H(+) (TC 2.A.33) antiporter family.

It is found in the cell membrane. It catalyses the reaction Na(+)(in) + 2 H(+)(out) = Na(+)(out) + 2 H(+)(in). In terms of biological role, na(+)/H(+) antiporter that extrudes sodium in exchange for external protons. The polypeptide is Na(+)/H(+) antiporter NhaA 2 (Salinispora arenicola (strain CNS-205)).